The following is a 62-amino-acid chain: Small ribosomal subunit protein eS27 (62 aa).

Zn(2+)-binding residues include Cys17, Cys20, Cys36, and Cys39. The C4-type zinc finger occupies 17 to 39; the sequence is CPDCENEQLVFEKATSVVECTVC.

This sequence belongs to the eukaryotic ribosomal protein eS27 family. In terms of assembly, part of the 30S ribosomal subunit. The cofactor is Zn(2+).

The protein is Small ribosomal subunit protein eS27 of Methanocorpusculum labreanum (strain ATCC 43576 / DSM 4855 / Z).